We begin with the raw amino-acid sequence, 489 residues long: Homoserine O-acetyltransferase (489 aa).

An AB hydrolase-1 domain is found at 69-438 (LLLCHALSGS…AEGHDGFLLE (370 aa)). The Nucleophile role is filled by S163. The disordered stretch occupies residues 255-329 (ASRHPYPDRL…QTTDSSSLNQ (75 aa)). A compositionally biased stretch (basic and acidic residues) spans 280–290 (EGNRNRRERPC). A compositionally biased stretch (low complexity) spans 299 to 329 (SESALNSPASSVSSLPSLGASQTTDSSSLNQ). Catalysis depends on residues D403 and H432.

Belongs to the AB hydrolase superfamily. MetX family.

The protein localises to the cytoplasm. The catalysed reaction is L-homoserine + acetyl-CoA = O-acetyl-L-homoserine + CoA. The protein operates within amino-acid biosynthesis; L-methionine biosynthesis via de novo pathway; O-acetyl-L-homoserine from L-homoserine: step 1/1. In terms of biological role, commits homoserine to the methionine biosynthesis pathway by catalyzing its O-acetylation. The chain is Homoserine O-acetyltransferase (met6) from Schizosaccharomyces pombe (strain 972 / ATCC 24843) (Fission yeast).